A 127-amino-acid chain; its full sequence is MAEAGAGGLSETVTETTVTVTTEPENRSLTIKLRKRKPEKKVEWSSDTVDNEHMGRRSSKCCCIYEKPRAFGESSTESDEDEEEGCGHTHCVRGHRKGRRPTTPGPTPTTPPQPPDPSQPPPGPMQH.

Disordered stretches follow at residues methionine 1 to glycine 55 and alanine 70 to histidine 127. At alanine 2 the chain carries N-acetylalanine. The segment covering glutamate 11–glutamate 23 has biased composition (low complexity). The span at lysine 40–glycine 55 shows a compositional bias: basic and acidic residues. The atypical RING finger domain 1 stretch occupies residues histidine 53–cysteine 63. Serine 74 and serine 75 each carry phosphoserine. Residue threonine 76 is modified to Phosphothreonine. Position 78 is a phosphoserine (serine 78). The atypical RING finger domain 2 stretch occupies residues cysteine 86–histidine 95. Residues histidine 90–arginine 100 are compositionally biased toward basic residues. Residues threonine 103–histidine 127 show a composition bias toward pro residues. Position 110 is a phosphothreonine (threonine 110).

Interacts with TLR2 and UBE2D2. In terms of processing, auto-ubiquitinated.

The enzyme catalyses S-ubiquitinyl-[E2 ubiquitin-conjugating enzyme]-L-cysteine + [acceptor protein]-L-lysine = [E2 ubiquitin-conjugating enzyme]-L-cysteine + N(6)-ubiquitinyl-[acceptor protein]-L-lysine.. It participates in protein modification; protein ubiquitination. Atypical E3 ubiquitin-protein ligase which ubiquitinates TLR2 at 'Lys-754' leading to its degradation by the proteasome. Plays a role in regulating inflammatory cytokine release and gram-positive bacterial clearance by functioning, in part, through the ubiquitination and degradation of TLR2. Inhibitor of protein phosphatase 1. This Rattus norvegicus (Rat) protein is E3 ubiquitin-protein ligase PPP1R11 (Ppp1r11).